Reading from the N-terminus, the 538-residue chain is Nicotinate phosphoribosyltransferase (538 aa).

Nicotinate-binding residues include Y21 and T210. H213 is subject to Phosphohistidine. A nicotinate-binding site is contributed by R318. T380 contacts 5-phospho-alpha-D-ribose 1-diphosphate.

This sequence belongs to the NAPRTase family. As to quaternary structure, homodimer. Mg(2+) serves as cofactor. Mn(2+) is required as a cofactor. Transiently phosphorylated on a His residue during the reaction cycle. Phosphorylation strongly increases the affinity for substrates and increases the rate of nicotinate D-ribonucleotide production. Dephosphorylation regenerates the low-affinity form of the enzyme, leading to product release.

It localises to the cytoplasm. The protein resides in the cytosol. It catalyses the reaction nicotinate + 5-phospho-alpha-D-ribose 1-diphosphate + ATP + H2O = nicotinate beta-D-ribonucleotide + ADP + phosphate + diphosphate. Its pathway is cofactor biosynthesis; NAD(+) biosynthesis; nicotinate D-ribonucleotide from nicotinate: step 1/1. Its function is as follows. Catalyzes the first step in the biosynthesis of NAD from nicotinic acid, the ATP-dependent synthesis of beta-nicotinate D-ribonucleotide from nicotinate and 5-phospho-D-ribose 1-phosphate. Helps prevent cellular oxidative stress via its role in NAD biosynthesis. In Bos taurus (Bovine), this protein is Nicotinate phosphoribosyltransferase (NAPRT).